Consider the following 592-residue polypeptide: Membrane protein insertase YidC (592 aa).

The next 5 helical transmembrane spans lie at 8 to 28 (LFIA…FVMG), 363 to 385 (ALGQ…MFPL), 430 to 450 (INPL…FALY), 493 to 513 (IWLI…GLTM), and 531 to 551 (IFAF…AGLV).

This sequence belongs to the OXA1/ALB3/YidC family. Type 1 subfamily. As to quaternary structure, interacts with the Sec translocase complex via SecD. Specifically interacts with transmembrane segments of nascent integral membrane proteins during membrane integration.

Its subcellular location is the cell inner membrane. Its function is as follows. Required for the insertion and/or proper folding and/or complex formation of integral membrane proteins into the membrane. Involved in integration of membrane proteins that insert both dependently and independently of the Sec translocase complex, as well as at least some lipoproteins. Aids folding of multispanning membrane proteins. This is Membrane protein insertase YidC from Maricaulis maris (strain MCS10) (Caulobacter maris).